Reading from the N-terminus, the 406-residue chain is Sprouty-related, EVH1 domain-containing protein 1 (406 aa).

The WH1 domain occupies 3 to 120 (GEQEPDDSYA…RGIRRAIEDL (118 aa)). Residues 124 to 154 (LPASCHGESETSEDGPQVNKEDHYSTHNNDH) form a disordered region. The span at 142 to 154 (NKEDHYSTHNNDH) shows a compositional bias: basic and acidic residues. Positions 195 to 247 (PIRHVSFQDEDEIVRINPRDMIIRRYADYRHPDIFRNDVDREEPEDVTFFTKT) constitute a KBD domain. Positions 296 to 404 (SCVYCQERFN…CGCCGGKHKA (109 aa)) constitute an SPR domain.

In terms of processing, palmitoylated by ZDHHC17/HIP14. Post-translationally, ubiquitinated. Phosphorylated on tyrosine.

The protein resides in the cell membrane. Tyrosine kinase substrate that inhibits growth-factor-mediated activation of MAP kinase. This chain is Sprouty-related, EVH1 domain-containing protein 1 (spred1), found in Xenopus tropicalis (Western clawed frog).